The chain runs to 784 residues: Protein translocase subunit SecA 2 (784 aa).

ATP-binding positions include Gln-94, 112-116 (GEGKT), and Asp-501.

It belongs to the SecA family. As to quaternary structure, monomer and homodimer. Part of the essential Sec protein translocation apparatus which comprises SecA, SecYEG and auxiliary proteins SecDF. Other proteins may also be involved.

The protein localises to the cell membrane. It is found in the cytoplasm. It catalyses the reaction ATP + H2O + cellular proteinSide 1 = ADP + phosphate + cellular proteinSide 2.. In terms of biological role, part of the Sec protein translocase complex. Interacts with the SecYEG preprotein conducting channel. Has a central role in coupling the hydrolysis of ATP to the transfer of proteins into and across the cell membrane, serving as an ATP-driven molecular motor driving the stepwise translocation of polypeptide chains across the membrane. This chain is Protein translocase subunit SecA 2, found in Mycolicibacterium smegmatis (strain ATCC 700084 / mc(2)155) (Mycobacterium smegmatis).